The following is a 345-amino-acid chain: UDP-3-O-acylglucosamine N-acyltransferase (345 aa).

The active-site Proton acceptor is the His237.

It belongs to the transferase hexapeptide repeat family. LpxD subfamily. As to quaternary structure, homotrimer.

It catalyses the reaction a UDP-3-O-[(3R)-3-hydroxyacyl]-alpha-D-glucosamine + a (3R)-hydroxyacyl-[ACP] = a UDP-2-N,3-O-bis[(3R)-3-hydroxyacyl]-alpha-D-glucosamine + holo-[ACP] + H(+). The protein operates within bacterial outer membrane biogenesis; LPS lipid A biosynthesis. Catalyzes the N-acylation of UDP-3-O-acylglucosamine using 3-hydroxyacyl-ACP as the acyl donor. Is involved in the biosynthesis of lipid A, a phosphorylated glycolipid that anchors the lipopolysaccharide to the outer membrane of the cell. The sequence is that of UDP-3-O-acylglucosamine N-acyltransferase from Geobacter sp. (strain M21).